The sequence spans 296 residues: Thioredoxin-related transmembrane protein 2 (296 aa).

An N-terminal signal peptide occupies residues 1 to 48 (MAVLAPLIALVYSVPRLSRWLARPYYFLSALLSAAFLLVRKLPPVCES). Over 49–102 (LPTQREDGNPCDFDWREVEILMFLSAIVMMKNRRSITVEQHVGNIFMFSKVANA) the chain is Extracellular. The chain crosses the membrane as a helical span at residues 103–125 (ILFFRLDIRMGLLYITLCIVFLM). Residues 126 to 296 (TCKPPLYMGP…VPDEESKKDK (171 aa)) are Cytoplasmic-facing. Positions 132–269 (YMGPEYIKYF…LYQRAKKLSK (138 aa)) constitute a Thioredoxin domain. 2 positions are modified to phosphoserine: S211 and S243. The interval 272-296 (DKIPEEQPVAAVPAAVPDEESKKDK) is disordered. Positions 277–287 (EQPVAAVPAAV) are enriched in low complexity. The short motif at 293-296 (KKDK) is the Di-lysine motif element.

Monomer. Homodimer; disulfide-linked. Occurs in both reduced and oxidized monomeric form. Oxidative conditions increase homodimerization. Interacts with CANX. Interacts with ATP2A2.

It localises to the endoplasmic reticulum membrane. The protein resides in the mitochondrion membrane. Its function is as follows. Endoplasmic reticulum and mitochondria-associated protein that probably functions as a regulator of cellular redox state and thereby regulates protein post-translational modification, protein folding and mitochondrial activity. Indirectly regulates neuronal proliferation, migration, and organization in the developing brain. The protein is Thioredoxin-related transmembrane protein 2 (TMX2) of Bos taurus (Bovine).